The following is a 332-amino-acid chain: 2,3-diketo-L-gulonate reductase (332 aa).

Residue His-44 is the Proton donor of the active site. NAD(+)-binding positions include 168-174 (ITMVDMS), 224-225 (WK), and 304-306 (GHE).

Belongs to the LDH2/MDH2 oxidoreductase family. DlgD subfamily. In terms of assembly, homodimer.

The protein resides in the cytoplasm. The enzyme catalyses 3-dehydro-L-gulonate + NAD(+) = 2,3-dioxo-L-gulonate + NADH + H(+). It carries out the reaction 3-dehydro-L-gulonate + NADP(+) = 2,3-dioxo-L-gulonate + NADPH + H(+). In terms of biological role, catalyzes the reduction of 2,3-diketo-L-gulonate in the presence of NADH, to form 3-keto-L-gulonate. This Salmonella newport (strain SL254) protein is 2,3-diketo-L-gulonate reductase.